A 157-amino-acid chain; its full sequence is Small ribosomal subunit protein uS7 (157 aa).

This sequence belongs to the universal ribosomal protein uS7 family. In terms of assembly, part of the 30S ribosomal subunit. Contacts proteins S9 and S11.

One of the primary rRNA binding proteins, it binds directly to 16S rRNA where it nucleates assembly of the head domain of the 30S subunit. Is located at the subunit interface close to the decoding center, probably blocks exit of the E-site tRNA. In Borrelia duttonii (strain Ly), this protein is Small ribosomal subunit protein uS7.